The sequence spans 495 residues: Cobyric acid synthase (495 aa).

A GATase cobBQ-type domain is found at 262-445 (CLEIAVIRLP…LHGLFDNHRW (184 aa)). The Nucleophile role is filled by Cys-340. His-437 is an active-site residue.

The protein belongs to the CobB/CobQ family. CobQ subfamily.

It participates in cofactor biosynthesis; adenosylcobalamin biosynthesis. Functionally, catalyzes amidations at positions B, D, E, and G on adenosylcobyrinic A,C-diamide. NH(2) groups are provided by glutamine, and one molecule of ATP is hydrogenolyzed for each amidation. The polypeptide is Cobyric acid synthase (Synechococcus sp. (strain JA-3-3Ab) (Cyanobacteria bacterium Yellowstone A-Prime)).